The sequence spans 166 residues: NADH-quinone oxidoreductase subunit B (166 aa).

Residues Cys44, Cys45, Cys110, and Cys140 each contribute to the [4Fe-4S] cluster site.

It belongs to the complex I 20 kDa subunit family. In terms of assembly, NDH-1 is composed of 14 different subunits. Subunits NuoB, C, D, E, F, and G constitute the peripheral sector of the complex. [4Fe-4S] cluster serves as cofactor.

The protein resides in the cell membrane. The catalysed reaction is a quinone + NADH + 5 H(+)(in) = a quinol + NAD(+) + 4 H(+)(out). In terms of biological role, NDH-1 shuttles electrons from NADH, via FMN and iron-sulfur (Fe-S) centers, to quinones in the respiratory chain. The immediate electron acceptor for the enzyme in this species is believed to be a menaquinone. Couples the redox reaction to proton translocation (for every two electrons transferred, four hydrogen ions are translocated across the cytoplasmic membrane), and thus conserves the redox energy in a proton gradient. In Carboxydothermus hydrogenoformans (strain ATCC BAA-161 / DSM 6008 / Z-2901), this protein is NADH-quinone oxidoreductase subunit B.